The following is a 273-amino-acid chain: Translation initiation factor 2 subunit alpha (273 aa).

The S1 motif domain maps to 12 to 83; that stretch reads GEFVVATVKN…EKGHIDLSLK (72 aa).

This sequence belongs to the eIF-2-alpha family. Heterotrimer composed of an alpha, a beta and a gamma chain.

In terms of biological role, eIF-2 functions in the early steps of protein synthesis by forming a ternary complex with GTP and initiator tRNA. This chain is Translation initiation factor 2 subunit alpha, found in Thermococcus gammatolerans (strain DSM 15229 / JCM 11827 / EJ3).